We begin with the raw amino-acid sequence, 106 residues long: Nucleoid-associated protein RPA0616 (106 aa).

The protein belongs to the YbaB/EbfC family. In terms of assembly, homodimer.

Its subcellular location is the cytoplasm. The protein resides in the nucleoid. Binds to DNA and alters its conformation. May be involved in regulation of gene expression, nucleoid organization and DNA protection. The protein is Nucleoid-associated protein RPA0616 of Rhodopseudomonas palustris (strain ATCC BAA-98 / CGA009).